A 367-amino-acid chain; its full sequence is MAKESKLTAGVAAALTVVAACALCLLLPATARAQLRVGFYDTSCPNAEALVRQAVAAAFAKDAGIAAGLIRLHFHDCFVRGCDGSVLLTVNPGGGQTERDALPNNPSLRGFDVIDAAKTAVEQSCPRTVSCADIVAFAARDSISLTGSVSYQVPAGRRDGRVSNATETVDLPPPTSTAQSLTDLFKAKELSVEDMVVLSGAHTVGRSFCASFFKRVWNTSTNPATAIVDAGLSPSYAQLLRALCPSNTTQTTPITTAMDPGTPNVLDNNYYKLLPRGMGLFFSDNQLRVNPQMAALVSSFASNETLWKEKFAAAMVKMGRIQVQTGTCGEVRLNCGVVNPSLYSSSSAVELGSSAPAAVGEEGYAAS.

The signal sequence occupies residues Met-1–Ala-33. Residue Gln-34 is modified to Pyrrolidone carboxylic acid. 4 disulfides stabilise this stretch: Cys-44-Cys-125, Cys-77-Cys-82, Cys-131-Cys-335, and Cys-209-Cys-244. Residue His-75 is the Proton acceptor of the active site. Ca(2+) contacts are provided by Asp-76, Val-79, Gly-81, Asp-83, and Ser-85. Asn-164 is a glycosylation site (N-linked (GlcNAc...) asparagine). Pro-172 is a binding site for substrate. His-202 lines the heme b pocket. Residue Thr-203 coordinates Ca(2+). Residues Asn-218 and Asn-247 are each glycosylated (N-linked (GlcNAc...) asparagine). Residues Asp-259, Thr-262, and Asp-267 each coordinate Ca(2+). The N-linked (GlcNAc...) asparagine glycan is linked to Asn-303.

Belongs to the peroxidase family. Classical plant (class III) peroxidase subfamily. Requires heme b as cofactor. The cofactor is Ca(2+). In terms of tissue distribution, expressed in the root tip meristems.

It is found in the secreted. The protein resides in the vacuole. The catalysed reaction is 2 a phenolic donor + H2O2 = 2 a phenolic radical donor + 2 H2O. In terms of biological role, removal of H(2)O(2), oxidation of toxic reductants, biosynthesis and degradation of lignin, suberization, auxin catabolism, response to environmental stresses such as wounding, pathogen attack and oxidative stress. These functions might be dependent on each isozyme/isoform in each plant tissue. In Zea mays (Maize), this protein is Peroxidase 1 (PER1).